We begin with the raw amino-acid sequence, 338 residues long: Ketol-acid reductoisomerase (NADP(+)) (338 aa).

Positions 1 to 181 constitute a KARI N-terminal Rossmann domain; sequence MQVYYDKDCD…GGGRTGIIET (181 aa). NADP(+) contacts are provided by residues 24 to 27, arginine 47, serine 50, serine 52, and 82 to 85; these read YGSQ and DEFQ. Histidine 107 is a catalytic residue. Position 133 (glycine 133) interacts with NADP(+). A KARI C-terminal knotted domain is found at 182–327; that stretch reads TFKDETETDL…EKLRGMMPWI (146 aa). 4 residues coordinate Mg(2+): aspartate 190, glutamate 194, glutamate 226, and glutamate 230. Position 251 (serine 251) interacts with substrate.

It belongs to the ketol-acid reductoisomerase family. Mg(2+) serves as cofactor.

It catalyses the reaction (2R)-2,3-dihydroxy-3-methylbutanoate + NADP(+) = (2S)-2-acetolactate + NADPH + H(+). It carries out the reaction (2R,3R)-2,3-dihydroxy-3-methylpentanoate + NADP(+) = (S)-2-ethyl-2-hydroxy-3-oxobutanoate + NADPH + H(+). It participates in amino-acid biosynthesis; L-isoleucine biosynthesis; L-isoleucine from 2-oxobutanoate: step 2/4. Its pathway is amino-acid biosynthesis; L-valine biosynthesis; L-valine from pyruvate: step 2/4. Involved in the biosynthesis of branched-chain amino acids (BCAA). Catalyzes an alkyl-migration followed by a ketol-acid reduction of (S)-2-acetolactate (S2AL) to yield (R)-2,3-dihydroxy-isovalerate. In the isomerase reaction, S2AL is rearranged via a Mg-dependent methyl migration to produce 3-hydroxy-3-methyl-2-ketobutyrate (HMKB). In the reductase reaction, this 2-ketoacid undergoes a metal-dependent reduction by NADPH to yield (R)-2,3-dihydroxy-isovalerate. This chain is Ketol-acid reductoisomerase (NADP(+)), found in Alcanivorax borkumensis (strain ATCC 700651 / DSM 11573 / NCIMB 13689 / SK2).